Here is a 62-residue protein sequence, read N- to C-terminus: SPbeta prophage-derived uncharacterized protein YonU (62 aa).

The stretch at Met-1–Arg-32 forms a coiled coil.

This chain is SPbeta prophage-derived uncharacterized protein YonU (yonU), found in Bacillus subtilis (strain 168).